The chain runs to 122 residues: Large ribosomal subunit protein uL14c (122 aa).

The protein belongs to the universal ribosomal protein uL14 family. As to quaternary structure, part of the 50S ribosomal subunit.

The protein resides in the plastid. Its subcellular location is the chloroplast. Binds to 23S rRNA. This chain is Large ribosomal subunit protein uL14c, found in Stigeoclonium helveticum (Green alga).